We begin with the raw amino-acid sequence, 129 residues long: M-zodatoxin-Lt8d (129 aa).

The N-terminal stretch at 1–20 (MKYFVVALALVAAFACIAES) is a signal peptide. A propeptide spanning residues 21-60 (KPAESEHELAEVEEENELADLEDAVWLEHLADLSDLEEAR) is cleaved from the precursor. Residues 57–60 (EEAR) carry the Processing quadruplet motif motif.

Post-translationally, cleavage of the propeptide depends on the processing quadruplet motif (XXXR, with at least one of X being E). Expressed by the venom gland.

Its subcellular location is the secreted. Insecticidal, cytolytic and antimicrobial peptide. Forms voltage-dependent, ion-permeable channels in membranes. At high concentration causes cell membrane lysis. The polypeptide is M-zodatoxin-Lt8d (cit 1-4) (Lachesana tarabaevi (Spider)).